We begin with the raw amino-acid sequence, 139 residues long: MNKHALLNADMNYLVATLGHTDEVAICDAGLPIPAAVQRIDLALTHGVPSFIATVKIWLASSQIEGVVLAQEFADVSPECHQALLVEIEAEQLATGRTFSIEYVSHEAFKQRTHNSRAVIRTGECTPYANVIFKTGVVF.

His-20 acts as the Proton donor in catalysis. Residues Asp-28, His-106, and 128 to 130 (YAN) each bind substrate.

This sequence belongs to the RbsD / FucU family. RbsD subfamily. As to quaternary structure, homodecamer.

It localises to the cytoplasm. It catalyses the reaction beta-D-ribopyranose = beta-D-ribofuranose. It functions in the pathway carbohydrate metabolism; D-ribose degradation; D-ribose 5-phosphate from beta-D-ribopyranose: step 1/2. Its function is as follows. Catalyzes the interconversion of beta-pyran and beta-furan forms of D-ribose. The protein is D-ribose pyranase of Shewanella halifaxensis (strain HAW-EB4).